Here is a 977-residue protein sequence, read N- to C-terminus: Collagen alpha-2(I) chain (977 aa).

Residues 1–977 form a disordered region; the sequence is SGGFDFSFLP…RGSQGSQGPS (977 aa). Residues Pro-10, Pro-13, Pro-28, and Pro-34 each carry the 4-hydroxyproline modification. A compositionally biased stretch (low complexity) spans 17–66; that stretch reads GPMGLMGPRGPPGASGAPGPQGFQGPAGEPGEPGQTGPAGARGPAGPPGK. The residue at position 91 (Lys-91) is a 5-hydroxylysine; alternate. An O-linked (Gal...) hydroxylysine; alternate glycan is attached at Lys-91. Low complexity-rich tracts occupy residues 138 to 159 and 205 to 226; these read SRGSDGSVGPVGPAGPIGSAGP and PGANGLTGAKGAAGLPGVAGAP. The span at 258-267 shows a compositional bias: gly residues; it reads GESGGKGEPG. Residues 268–278 are compositionally biased toward low complexity; that stretch reads SAGPQGPPGSS. A compositionally biased stretch (gly residues) spans 300-309; sequence GLRGGPGSRG. Residues 322 to 338 are compositionally biased toward low complexity; it reads PAGARGASGPAGVRGPS. Residues Pro-344 and Pro-347 each carry the 4-hydroxyproline modification. Low complexity predominate over residues 373–392; sequence LPGIDGRPGPIGPAGARGEA. Over residues 441 to 450 the composition is skewed to gly residues; the sequence is GVQGGKGEQG. Composition is skewed to low complexity over residues 497–514 and 526–536; these read SGESGAVGPSGAIGSRGP and EPGVVGAPGTA. The segment covering 537 to 546 has biased composition (gly residues); it reads GPAGSGGLPG. 2 stretches are compositionally biased toward low complexity: residues 569-605 and 620-640; these read VGTTGRDGARGAPGAVGAPGPAGATGDRGEAGAAGPA and VGPAGPNGFAGPAGAAGQPGA. Basic and acidic residues predominate over residues 641–650; sequence KGERGTKGPK. Over residues 658-668 the composition is skewed to low complexity; that stretch reads PTGPVGSAGPA. Residues 678–687 are compositionally biased toward gly residues; that stretch reads GSRGDGGPPG. Low complexity predominate over residues 689–698; the sequence is TGFPGAAGRT. The segment covering 735–744 has biased composition (gly residues); it reads GETGAGGPPG. Low complexity-rich tracts occupy residues 752-779 and 787-797; these read SGEPGTAGPPGTAGPQGLLGAPGILGLP and LPGVAGAVGEP. Residues 798 to 817 are compositionally biased toward gly residues; the sequence is GPLGIGPPGARGPSGAGVNG. Low complexity-rich tracts occupy residues 853–871 and 878–898; these read PVGAAGAPGPHGAVGPAGK and PGPAGSVGPVGAVGPRGPSGP. A compositionally biased stretch (basic and acidic residues) spans 902 to 913; that stretch reads RGDKGEAGDKGP.

It belongs to the fibrillar collagen family. As to quaternary structure, trimers of one alpha 2(I) and two alpha 1(I) chains. Interacts (via C-terminus) with TMEM131 (via PapD-L domain); the interaction is direct and is involved in assembly and TRAPPIII ER-to-Golgi transport complex-dependent secretion of collagen. Prolines at the third position of the tripeptide repeating unit (G-X-Y) are hydroxylated in some or all of the chains. In terms of tissue distribution, expressed in bones.

It localises to the secreted. The protein resides in the extracellular space. The protein localises to the extracellular matrix. Type I collagen is a member of group I collagen (fibrillar forming collagen). The protein is Collagen alpha-2(I) chain of Scelidodon sp. (strain SLP-2019) (South American ground sloth).